Here is an 874-residue protein sequence, read N- to C-terminus: Trimodular acetylaranotin synthesis protein ataIMG (874 aa).

The segment at 1 to 339 is aminotransferase ataI; the sequence is MANLSGLSNR…DSGLLRASSI (339 aa). Positions 20–39 are disordered; sequence RFGFQTTQQAKPTESSKTPI. The span at 23–37 shows a compositional bias: polar residues; the sequence is FQTTQQAKPTESSKT. An O-methyltransferase ataM region spans residues 340-668; the sequence is SYNSMVKGSS…QERTEAEWRT (329 aa). Position 625 (Asp-625) interacts with S-adenosyl-L-methionine. Positions 669–874 are glutathione S-transferase ataG; that stretch reads LAGRTGWEIR…VMEMGPQIGH (206 aa). The 68-residue stretch at 699–766 folds into the GST N-terminal domain; it reads KPLILAHELE…YLADRFDDGT (68 aa). The GST C-terminal domain occupies 739 to 874; the sequence is DPETKAEVIV…VMEMGPQIGH (136 aa).

In the N-terminal section; belongs to the class-I pyridoxal-phosphate-dependent aminotransferase family. It in the 2nd section; belongs to the class I-like SAM-binding methyltransferase superfamily. Cation-independent O-methyltransferase family. This sequence in the C-terminal section; belongs to the GST superfamily. The cofactor is pyridoxal 5'-phosphate.

It catalyses the reaction RX + glutathione = an S-substituted glutathione + a halide anion + H(+). It functions in the pathway mycotoxin biosynthesis. Trimodular acetylaranotin synthesis protein; part of the gene cluster that mediates the biosynthesis of acetylaranotin, a member of the epipolythiodioxopiperazine (ETP) class of toxins characterized by a disulfide-bridged cyclic dipeptide. The first step of acetylaranotin biosynthesis is performed by the NRPS ataP which produces diketopiperazine cyclo-L-Phe-L-Phe via the condensation of 2 phenylalanines (L-Phe). The ataC domain of ataTC then catalyzes the formation of bishydroxylation of cyclo-L-Phe-L-Phe. The glutathione S-transferase domain ataG in ataIMG further catalyzes the conjugation of two glutathiones to the bishydroxylated intermediate. Next, the dipeptidase ataJ removes the Glu residues. The following step is performed by the carbon sulfur lyase domain ataI of ataIMG which may convert the bis-cysteinyl adduct to yield an epidithiol intermediate. The ataT domain from ataTC then catalyzes the oxidation of the free dithiols, followed by a cyclization step catalyzed by the cytochrome P450 ataF. AtaF probably acts as an epoxidase to promote a dual epoxidation formation at C8 and C9 along with C8' and C9', followed by the spontaneous nucleophilic attack of the amide nitrogens N10 and N10' to yield an intermediate with the pyrrolidine partial structure. The final steps of acetylaranotin biosynthesis involve the acetylation and ring rearrangement of an epitetrathiodiketopiperazine intermediate to produce acetylaranotin. AtaH probably catalyzes the acetylation of epitetrathiodiketopiperazine to produce a diacetate and ataY is responsible for the formation of the dihydrooxepin moiety that converts the diacetate intermediate to acetylaranotin via acetylapoaranotin. Both enzymes could function independently in the absence of the other. The acetylaranotin bis-thiomethyltransferase ataS located outside of acetylaranotin gene cluster is the main thiomethyltransferase responsible for converting acetylaranotin and its related intermediates to their methylated forms. This is Trimodular acetylaranotin synthesis protein ataIMG from Aspergillus terreus (strain NIH 2624 / FGSC A1156).